A 230-amino-acid polypeptide reads, in one-letter code: Biosynthetic peptidoglycan transglycosylase (230 aa).

The chain crosses the membrane as a helical span at residues 11-31; that stretch reads VLLVLVALFVLYQLWIFTLVL.

This sequence belongs to the glycosyltransferase 51 family.

It localises to the cell inner membrane. It catalyses the reaction [GlcNAc-(1-&gt;4)-Mur2Ac(oyl-L-Ala-gamma-D-Glu-L-Lys-D-Ala-D-Ala)](n)-di-trans,octa-cis-undecaprenyl diphosphate + beta-D-GlcNAc-(1-&gt;4)-Mur2Ac(oyl-L-Ala-gamma-D-Glu-L-Lys-D-Ala-D-Ala)-di-trans,octa-cis-undecaprenyl diphosphate = [GlcNAc-(1-&gt;4)-Mur2Ac(oyl-L-Ala-gamma-D-Glu-L-Lys-D-Ala-D-Ala)](n+1)-di-trans,octa-cis-undecaprenyl diphosphate + di-trans,octa-cis-undecaprenyl diphosphate + H(+). The protein operates within cell wall biogenesis; peptidoglycan biosynthesis. Its function is as follows. Peptidoglycan polymerase that catalyzes glycan chain elongation from lipid-linked precursors. The sequence is that of Biosynthetic peptidoglycan transglycosylase from Aromatoleum aromaticum (strain DSM 19018 / LMG 30748 / EbN1) (Azoarcus sp. (strain EbN1)).